A 165-amino-acid chain; its full sequence is Phosphopantetheine adenylyltransferase (165 aa).

Residue T10 coordinates substrate. ATP-binding positions include 10–11 and H18; that span reads TF. Substrate-binding residues include K42, L74, and R88. Residues 89-91, E99, and 124-130 each bind ATP; these read GLR and NAFISSS.

Belongs to the bacterial CoaD family. In terms of assembly, homohexamer. It depends on Mg(2+) as a cofactor.

It localises to the cytoplasm. The enzyme catalyses (R)-4'-phosphopantetheine + ATP + H(+) = 3'-dephospho-CoA + diphosphate. The protein operates within cofactor biosynthesis; coenzyme A biosynthesis; CoA from (R)-pantothenate: step 4/5. In terms of biological role, reversibly transfers an adenylyl group from ATP to 4'-phosphopantetheine, yielding dephospho-CoA (dPCoA) and pyrophosphate. The chain is Phosphopantetheine adenylyltransferase from Helicobacter hepaticus (strain ATCC 51449 / 3B1).